Here is a 1119-residue protein sequence, read N- to C-terminus: DNA-directed RNA polymerase subunit beta (1119 aa).

This sequence belongs to the RNA polymerase beta chain family. In terms of assembly, the RNAP catalytic core consists of 2 alpha, 1 beta, 1 beta' and 1 omega subunit. When a sigma factor is associated with the core the holoenzyme is formed, which can initiate transcription.

It carries out the reaction RNA(n) + a ribonucleoside 5'-triphosphate = RNA(n+1) + diphosphate. DNA-dependent RNA polymerase catalyzes the transcription of DNA into RNA using the four ribonucleoside triphosphates as substrates. The polypeptide is DNA-directed RNA polymerase subunit beta (Thermus aquaticus).